A 197-amino-acid chain; its full sequence is Ras-related protein RabG2 (197 aa).

GTP is bound by residues 13–20 (GDSAVGKT), 61–65 (DTAGQ), and 119–122 (NKCD). The interval 175-197 (SKPSVVNPGSGGTSNTGGKKKFC) is disordered. C197 carries the S-geranylgeranyl cysteine lipid modification.

It belongs to the small GTPase superfamily. Rab family.

The protein localises to the cell membrane. The sequence is that of Ras-related protein RabG2 (rabG2) from Dictyostelium discoideum (Social amoeba).